We begin with the raw amino-acid sequence, 886 residues long: KH domain-containing protein hrpk-2 (886 aa).

The segment covering 359-368 (DNHFYNDKDS) has biased composition (basic and acidic residues). Residues 359–433 (DNHFYNDKDS…SHRKESACVD (75 aa)) are disordered. 2 stretches are compositionally biased toward basic residues: residues 369 to 388 (GKHH…KKHY) and 415 to 425 (HERKKRQRSSH). 2 consecutive KH domains span residues 698–761 (KETV…IEKI) and 775–839 (PGIF…AYLT).

In Caenorhabditis elegans, this protein is KH domain-containing protein hrpk-2.